The sequence spans 156 residues: Small ribosomal subunit protein uS7cz/uS7cy (156 aa).

Belongs to the universal ribosomal protein uS7 family. Part of the 30S ribosomal subunit.

It localises to the plastid. Its subcellular location is the chloroplast. One of the primary rRNA binding proteins, it binds directly to 16S rRNA where it nucleates assembly of the head domain of the 30S subunit. The chain is Small ribosomal subunit protein uS7cz/uS7cy (rps7-A) from Triticum aestivum (Wheat).